A 131-amino-acid polypeptide reads, in one-letter code: Fumarate reductase subunit C (131 aa).

3 consecutive transmembrane segments (helical) span residues 30-50 (EGTA…LFAL), 57-77 (WMGF…LITL), and 109-129 (IIKG…YVAL).

It belongs to the FrdC family. Part of an enzyme complex containing four subunits: a flavoprotein (FrdA), an iron-sulfur protein (FrdB), and two hydrophobic anchor proteins (FrdC and FrdD).

The protein localises to the cell inner membrane. Two distinct, membrane-bound, FAD-containing enzymes are responsible for the catalysis of fumarate and succinate interconversion; fumarate reductase is used in anaerobic growth, and succinate dehydrogenase is used in aerobic growth. Anchors the catalytic components of the fumarate reductase complex to the cell inner membrane, binds quinones. In Salmonella heidelberg (strain SL476), this protein is Fumarate reductase subunit C.